Consider the following 266-residue polypeptide: Glucosamine-6-phosphate deaminase (266 aa).

Asp72 functions as the Proton acceptor; for enolization step in the catalytic mechanism. Asp141 acts as the For ring-opening step in catalysis. The Proton acceptor; for ring-opening step role is filled by His143. Glu148 serves as the catalytic For ring-opening step.

This sequence belongs to the glucosamine/galactosamine-6-phosphate isomerase family. NagB subfamily. As to quaternary structure, homohexamer; trimer of disulfide-linked dimers.

It catalyses the reaction alpha-D-glucosamine 6-phosphate + H2O = beta-D-fructose 6-phosphate + NH4(+). It functions in the pathway amino-sugar metabolism; N-acetylneuraminate degradation; D-fructose 6-phosphate from N-acetylneuraminate: step 5/5. Its activity is regulated as follows. Allosterically activated by N-acetylglucosamine 6-phosphate (GlcNAc6P). Its function is as follows. Catalyzes the reversible isomerization-deamination of glucosamine 6-phosphate (GlcN6P) to form fructose 6-phosphate (Fru6P) and ammonium ion. This is Glucosamine-6-phosphate deaminase from Escherichia coli O6:H1 (strain CFT073 / ATCC 700928 / UPEC).